The chain runs to 511 residues: Protein phosphatase 2C 7 (511 aa).

The first 19 residues, 1-19, serve as a signal peptide directing secretion; it reads MEEISPAVALTLGLANTMC. The PPM-type phosphatase domain maps to 188–501; it reads LWGTISICGG…DNISIIVIDL (314 aa). Mn(2+) contacts are provided by Asp-242, Gly-243, Asp-432, and Asp-492.

Belongs to the PP2C family. As to quaternary structure, interacts with PYL13. It depends on Mg(2+) as a cofactor. Mn(2+) is required as a cofactor. In terms of tissue distribution, expressed in seeds.

It carries out the reaction O-phospho-L-seryl-[protein] + H2O = L-seryl-[protein] + phosphate. The enzyme catalyses O-phospho-L-threonyl-[protein] + H2O = L-threonyl-[protein] + phosphate. Functionally, key component and repressor of the abscisic acid (ABA) signaling pathway that regulates numerous ABA responses, such as stomatal closure, seed germination and inhibition of vegetative growth. The polypeptide is Protein phosphatase 2C 7 (HAB2) (Arabidopsis thaliana (Mouse-ear cress)).